The following is a 308-amino-acid chain: tRNA dimethylallyltransferase 1 (308 aa).

Residue 9–16 (GPTGVGKT) coordinates ATP. A substrate-binding site is contributed by 11–16 (TGVGKT). The segment at 34 to 37 (DSRQ) is interaction with substrate tRNA.

The protein belongs to the IPP transferase family. As to quaternary structure, monomer. Mg(2+) serves as cofactor.

The catalysed reaction is adenosine(37) in tRNA + dimethylallyl diphosphate = N(6)-dimethylallyladenosine(37) in tRNA + diphosphate. Its function is as follows. Catalyzes the transfer of a dimethylallyl group onto the adenine at position 37 in tRNAs that read codons beginning with uridine, leading to the formation of N6-(dimethylallyl)adenosine (i(6)A). The protein is tRNA dimethylallyltransferase 1 of Bacteroides thetaiotaomicron (strain ATCC 29148 / DSM 2079 / JCM 5827 / CCUG 10774 / NCTC 10582 / VPI-5482 / E50).